A 414-amino-acid polypeptide reads, in one-letter code: Gamma-glutamyl phosphate reductase (414 aa).

This sequence belongs to the gamma-glutamyl phosphate reductase family.

It is found in the cytoplasm. It carries out the reaction L-glutamate 5-semialdehyde + phosphate + NADP(+) = L-glutamyl 5-phosphate + NADPH + H(+). It participates in amino-acid biosynthesis; L-proline biosynthesis; L-glutamate 5-semialdehyde from L-glutamate: step 2/2. Its function is as follows. Catalyzes the NADPH-dependent reduction of L-glutamate 5-phosphate into L-glutamate 5-semialdehyde and phosphate. The product spontaneously undergoes cyclization to form 1-pyrroline-5-carboxylate. The sequence is that of Gamma-glutamyl phosphate reductase from Bacillus anthracis (strain A0248).